The following is a 268-amino-acid chain: Hydroxyethylthiazole kinase (268 aa).

Position 47 (M47) interacts with substrate. The ATP site is built by K123 and T170. Residue A196 coordinates substrate.

The protein belongs to the Thz kinase family. Mg(2+) is required as a cofactor.

It carries out the reaction 5-(2-hydroxyethyl)-4-methylthiazole + ATP = 4-methyl-5-(2-phosphooxyethyl)-thiazole + ADP + H(+). It participates in cofactor biosynthesis; thiamine diphosphate biosynthesis; 4-methyl-5-(2-phosphoethyl)-thiazole from 5-(2-hydroxyethyl)-4-methylthiazole: step 1/1. Catalyzes the phosphorylation of the hydroxyl group of 4-methyl-5-beta-hydroxyethylthiazole (THZ). This chain is Hydroxyethylthiazole kinase, found in Finegoldia magna (strain ATCC 29328 / DSM 20472 / WAL 2508) (Peptostreptococcus magnus).